We begin with the raw amino-acid sequence, 207 residues long: NADH-quinone oxidoreductase subunit C (207 aa).

Belongs to the complex I 30 kDa subunit family. In terms of assembly, NDH-1 is composed of 14 different subunits. Subunits NuoB, C, D, E, F, and G constitute the peripheral sector of the complex.

The protein localises to the cell inner membrane. It carries out the reaction a quinone + NADH + 5 H(+)(in) = a quinol + NAD(+) + 4 H(+)(out). Functionally, NDH-1 shuttles electrons from NADH, via FMN and iron-sulfur (Fe-S) centers, to quinones in the respiratory chain. The immediate electron acceptor for the enzyme in this species is believed to be ubiquinone. Couples the redox reaction to proton translocation (for every two electrons transferred, four hydrogen ions are translocated across the cytoplasmic membrane), and thus conserves the redox energy in a proton gradient. The chain is NADH-quinone oxidoreductase subunit C from Rickettsia felis (strain ATCC VR-1525 / URRWXCal2) (Rickettsia azadi).